Here is a 215-residue protein sequence, read N- to C-terminus: Chaperone protein TorD (215 aa).

It belongs to the TorD/DmsD family. TorD subfamily.

Its subcellular location is the cytoplasm. Its function is as follows. Involved in the biogenesis of TorA. Acts on TorA before the insertion of the molybdenum cofactor and, as a result, probably favors a conformation of the apoenzyme that is competent for acquiring the cofactor. This is Chaperone protein TorD from Vibrio vulnificus (strain YJ016).